The chain runs to 85 residues: RNA-binding protein Hfq (85 aa).

The Sm domain occupies 10–70 (DIFLNGARKN…ISTINPAKPL (61 aa)).

The protein belongs to the Hfq family. As to quaternary structure, homohexamer.

In terms of biological role, RNA chaperone that binds small regulatory RNA (sRNAs) and mRNAs to facilitate mRNA translational regulation in response to envelope stress, environmental stress and changes in metabolite concentrations. Also binds with high specificity to tRNAs. The sequence is that of RNA-binding protein Hfq from Clostridium botulinum (strain 657 / Type Ba4).